The sequence spans 250 residues: Pyridoxine 5'-phosphate synthase (250 aa).

Positions 8 and 19 each coordinate 3-amino-2-oxopropyl phosphate. Residue His-44 is the Proton acceptor of the active site. 1-deoxy-D-xylulose 5-phosphate contacts are provided by Arg-46 and His-51. The active-site Proton acceptor is the Glu-76. Thr-106 contributes to the 1-deoxy-D-xylulose 5-phosphate binding site. The Proton donor role is filled by His-200. 3-amino-2-oxopropyl phosphate contacts are provided by residues Asp-201 and 223–224 (GH).

It belongs to the PNP synthase family. In terms of assembly, homooctamer; tetramer of dimers.

Its subcellular location is the cytoplasm. It carries out the reaction 3-amino-2-oxopropyl phosphate + 1-deoxy-D-xylulose 5-phosphate = pyridoxine 5'-phosphate + phosphate + 2 H2O + H(+). It functions in the pathway cofactor biosynthesis; pyridoxine 5'-phosphate biosynthesis; pyridoxine 5'-phosphate from D-erythrose 4-phosphate: step 5/5. Functionally, catalyzes the complicated ring closure reaction between the two acyclic compounds 1-deoxy-D-xylulose-5-phosphate (DXP) and 3-amino-2-oxopropyl phosphate (1-amino-acetone-3-phosphate or AAP) to form pyridoxine 5'-phosphate (PNP) and inorganic phosphate. The chain is Pyridoxine 5'-phosphate synthase from Allorhizobium ampelinum (strain ATCC BAA-846 / DSM 112012 / S4) (Agrobacterium vitis (strain S4)).